Here is a 156-residue protein sequence, read N- to C-terminus: Small ribosomal subunit protein uS7 (156 aa).

This sequence belongs to the universal ribosomal protein uS7 family. As to quaternary structure, part of the 30S ribosomal subunit. Contacts proteins S9 and S11.

In terms of biological role, one of the primary rRNA binding proteins, it binds directly to 16S rRNA where it nucleates assembly of the head domain of the 30S subunit. Is located at the subunit interface close to the decoding center, probably blocks exit of the E-site tRNA. In Rhizobium meliloti (strain 1021) (Ensifer meliloti), this protein is Small ribosomal subunit protein uS7.